The chain runs to 218 residues: Monomethylamine corrinoid protein 2 (218 aa).

The B12-binding N-terminal domain maps to 1–91 (MTNTEIFNKL…ELEKTKVEGE (91 aa)). The region spanning 94-218 (TGLAITFVAE…AAKVALNVMK (125 aa)) is the B12-binding domain. Residue histidine 107 participates in methylcob(III)alamin binding.

The protein belongs to the methylamine corrinoid protein family. As to quaternary structure, can form a complex with MtmB.

Its pathway is one-carbon metabolism; methanogenesis from methylamine. Functionally, acts as a methyl group carrier between MtmB and MtbA. In Methanosarcina mazei (strain ATCC BAA-159 / DSM 3647 / Goe1 / Go1 / JCM 11833 / OCM 88) (Methanosarcina frisia), this protein is Monomethylamine corrinoid protein 2 (mtmC2).